Here is a 388-residue protein sequence, read N- to C-terminus: Probable ubiquitin-conjugating enzyme E2 L709 (388 aa).

A UBC core domain is found at 3–162; it reads NVHKRVIKDI…GNDLMVQKLF (160 aa). C95 functions as the Glycyl thioester intermediate in the catalytic mechanism. The interval 195-388 is disordered; sequence VEEKSAKTSK…SSKSSKTGKK (194 aa). Composition is skewed to acidic residues over residues 221 to 238 and 246 to 297; these read SEEEENSDDDNTDSDSES and DVVD…ESEE. The segment covering 310-388 has biased composition (low complexity); the sequence is KTTTKSSSTK…SSKSSKTGKK (79 aa).

The protein belongs to the ubiquitin-conjugating enzyme family.

The catalysed reaction is S-ubiquitinyl-[E1 ubiquitin-activating enzyme]-L-cysteine + [E2 ubiquitin-conjugating enzyme]-L-cysteine = [E1 ubiquitin-activating enzyme]-L-cysteine + S-ubiquitinyl-[E2 ubiquitin-conjugating enzyme]-L-cysteine.. It participates in protein modification; protein ubiquitination. Functionally, catalyzes the covalent attachment of ubiquitin to other proteins. This is Probable ubiquitin-conjugating enzyme E2 L709 from Acanthamoeba polyphaga (Amoeba).